The sequence spans 67 residues: Protein LITTLE ZIPPER 3 (67 aa).

Residues Y14–K59 adopt a coiled-coil conformation. Residues Q42–S67 are disordered.

Interacts with REV. Interacts with ATBH-8, ATBH-9, ATB-14 and ATB-15. Expressed in the adaxial epidermis of the cotyledons and leaves, and in the vascular cylinder of wild-type torpedo stage embryos. Confined in the central zone and the organizing center in the shoot apical meristem.

It is found in the nucleus. Competitive inhibitor of the HD-ZIPIII transcription factors in shoot apical meristem (SAM) development. Acts by forming non-functional heterodimers. Part of a negative feedback loop. Involved in SAM development and lateral organ patterning. Essential for proper functioning of stem cells in the SAM. The protein is Protein LITTLE ZIPPER 3 of Arabidopsis thaliana (Mouse-ear cress).